A 258-amino-acid polypeptide reads, in one-letter code: GTP cyclohydrolase FolE2 (258 aa).

This sequence belongs to the GTP cyclohydrolase IV family.

The enzyme catalyses GTP + H2O = 7,8-dihydroneopterin 3'-triphosphate + formate + H(+). It participates in cofactor biosynthesis; 7,8-dihydroneopterin triphosphate biosynthesis; 7,8-dihydroneopterin triphosphate from GTP: step 1/1. Converts GTP to 7,8-dihydroneopterin triphosphate. The sequence is that of GTP cyclohydrolase FolE2 from Geobacter sulfurreducens (strain ATCC 51573 / DSM 12127 / PCA).